A 312-amino-acid polypeptide reads, in one-letter code: Tetraspanin-17 (312 aa).

The next 4 membrane-spanning stretches (helical) occupy residues 17–37 (IFSI…LWML), 64–84 (VSLV…CGAV), 89–109 (FLLL…VAMG), and 274–294 (IWIF…GICL).

It belongs to the tetraspanin (TM4SF) family. Expressed in dopaminergic neurons, head muscles, vulva and spermatheca.

The protein localises to the cell membrane. Its subcellular location is the cell projection. It localises to the dendrite. The protein resides in the axon. Protects dopaminergic neurons against oxidative stress-induced neurodegeneration. May act partly via dopamine receptor dop-2 to negatively regulate dopamine reuptake transporter dat-1 activity. Also plays a role in modulating behaviors linked to dopamine signaling. Confers protection against oxidative stress in the whole body. This Caenorhabditis elegans protein is Tetraspanin-17.